Reading from the N-terminus, the 119-residue chain is Ribosome-binding factor A (119 aa).

It belongs to the RbfA family. Monomer. Binds 30S ribosomal subunits, but not 50S ribosomal subunits or 70S ribosomes.

Its subcellular location is the cytoplasm. In terms of biological role, one of several proteins that assist in the late maturation steps of the functional core of the 30S ribosomal subunit. Associates with free 30S ribosomal subunits (but not with 30S subunits that are part of 70S ribosomes or polysomes). Required for efficient processing of 16S rRNA. May interact with the 5'-terminal helix region of 16S rRNA. The sequence is that of Ribosome-binding factor A from Geobacter sp. (strain M21).